The primary structure comprises 148 residues: Glutamyl-tRNA(Gln) amidotransferase subunit C, mitochondrial (148 aa).

The transit peptide at 1 to 10 (MLRLLNKRFY) directs the protein to the mitochondrion.

This sequence belongs to the GatC family. As to quaternary structure, subunit of the heterotrimeric GatCAB amidotransferase (AdT) complex, composed of A, B and C subunits.

It is found in the mitochondrion. It carries out the reaction L-glutamyl-tRNA(Gln) + L-glutamine + ATP + H2O = L-glutaminyl-tRNA(Gln) + L-glutamate + ADP + phosphate + H(+). Its function is as follows. Allows the formation of correctly charged Gln-tRNA(Gln) through the transamidation of misacylated Glu-tRNA(Gln) in the mitochondria. The reaction takes place in the presence of glutamine and ATP through an activated gamma-phospho-Glu-tRNA(Gln). This Drosophila ananassae (Fruit fly) protein is Glutamyl-tRNA(Gln) amidotransferase subunit C, mitochondrial.